We begin with the raw amino-acid sequence, 244 residues long: tRNA pseudouridine synthase A (244 aa).

D52 acts as the Nucleophile in catalysis. Residue Y110 coordinates substrate.

Belongs to the tRNA pseudouridine synthase TruA family. Homodimer.

It catalyses the reaction uridine(38/39/40) in tRNA = pseudouridine(38/39/40) in tRNA. Formation of pseudouridine at positions 38, 39 and 40 in the anticodon stem and loop of transfer RNAs. The chain is tRNA pseudouridine synthase A from Caldicellulosiruptor bescii (strain ATCC BAA-1888 / DSM 6725 / KCTC 15123 / Z-1320) (Anaerocellum thermophilum).